The following is a 626-amino-acid chain: Elongation factor 4 (626 aa).

The 182-residue stretch at 14-195 folds into the tr-type G domain; the sequence is SVIRNFCIIA…QIVMDVPAPH (182 aa). Residues 26–31 and 142–145 contribute to the GTP site; these read DHGKST and NKID. Residues 603–626 form a disordered region; sequence LSTGEDSNDRDTKDKIRAAQKTEG. The segment covering 609 to 626 has biased composition (basic and acidic residues); the sequence is SNDRDTKDKIRAAQKTEG.

It belongs to the TRAFAC class translation factor GTPase superfamily. Classic translation factor GTPase family. LepA subfamily.

The protein localises to the cell membrane. The catalysed reaction is GTP + H2O = GDP + phosphate + H(+). Its function is as follows. Required for accurate and efficient protein synthesis under certain stress conditions. May act as a fidelity factor of the translation reaction, by catalyzing a one-codon backward translocation of tRNAs on improperly translocated ribosomes. Back-translocation proceeds from a post-translocation (POST) complex to a pre-translocation (PRE) complex, thus giving elongation factor G a second chance to translocate the tRNAs correctly. Binds to ribosomes in a GTP-dependent manner. This is Elongation factor 4 from Bifidobacterium longum subsp. infantis (strain ATCC 15697 / DSM 20088 / JCM 1222 / NCTC 11817 / S12).